Reading from the N-terminus, the 346-residue chain is L-malyl-CoA/beta-methylmalyl-CoA lyase (346 aa).

Mg(2+) contacts are provided by Glu148 and Asp177. Residues 176–177 and 253–254 each bind substrate; these read VD and LH.

The protein belongs to the HpcH/HpaI aldolase family. Mg(2+) serves as cofactor. Requires Mn(2+) as cofactor.

It carries out the reaction (S)-malyl-CoA = glyoxylate + acetyl-CoA. It catalyses the reaction (2R,3S)-beta-methylmalyl-CoA = propanoyl-CoA + glyoxylate. In terms of biological role, involved in the methylaspartate cycle. Catalyzes the reversible cleavage of beta-methylmalyl-CoA to propionyl-CoA and glyoxylate, as well as the reversible cleavage of (S)-malyl-CoA to acetyl-CoA and glyoxylate. In addition, it has a small malyl-CoA thioesterase activity. It can also catalyze the cleavage of (S)-citramalyl-CoA to acetyl-CoA and pyruvate. This Haloarcula marismortui (strain ATCC 43049 / DSM 3752 / JCM 8966 / VKM B-1809) (Halobacterium marismortui) protein is L-malyl-CoA/beta-methylmalyl-CoA lyase (citE1).